A 301-amino-acid chain; its full sequence is Acetylglutamate kinase (301 aa).

Residues Gly72–Gly73, Arg94, and Asn199 each bind substrate.

This sequence belongs to the acetylglutamate kinase family. ArgB subfamily.

The protein resides in the cytoplasm. The catalysed reaction is N-acetyl-L-glutamate + ATP = N-acetyl-L-glutamyl 5-phosphate + ADP. It participates in amino-acid biosynthesis; L-arginine biosynthesis; N(2)-acetyl-L-ornithine from L-glutamate: step 2/4. Its function is as follows. Catalyzes the ATP-dependent phosphorylation of N-acetyl-L-glutamate. The protein is Acetylglutamate kinase of Azorhizobium caulinodans (strain ATCC 43989 / DSM 5975 / JCM 20966 / LMG 6465 / NBRC 14845 / NCIMB 13405 / ORS 571).